Reading from the N-terminus, the 117-residue chain is Conotoxin vil14.3 (117 aa).

Residues 1–22 (MGFRVLVLVVMATTSALPFTFS) form the signal peptide. A propeptide spanning residues 23–90 (EEPGRSPFRP…FAELSVGQRR (68 aa)) is cleaved from the precursor. Residues 53–79 (RADGQPPDMRQPEMRRPEMRRPEVRQP) are disordered. The span at 62–79 (RQPEMRRPEMRRPEVRQP) shows a compositional bias: basic and acidic residues. 2 disulfide bridges follow: C96–C116 and C100–C112.

It belongs to the conotoxin R superfamily. Expressed by the venom duct.

The protein resides in the secreted. The chain is Conotoxin vil14.3 from Conus villepinii (Villepin's cone).